We begin with the raw amino-acid sequence, 598 residues long: Aspartate--tRNA(Asp/Asn) ligase (598 aa).

An L-aspartate-binding site is contributed by E177. The segment at 201–204 (QLFK) is aspartate. R223 is a binding site for L-aspartate. Residues 223 to 225 (RDE) and Q232 each bind ATP. H456 lines the L-aspartate pocket. Residue E493 coordinates ATP. R500 contacts L-aspartate. 545–548 (GLDR) serves as a coordination point for ATP.

This sequence belongs to the class-II aminoacyl-tRNA synthetase family. Type 1 subfamily. In terms of assembly, homodimer.

The protein resides in the cytoplasm. It carries out the reaction tRNA(Asx) + L-aspartate + ATP = L-aspartyl-tRNA(Asx) + AMP + diphosphate. Functionally, aspartyl-tRNA synthetase with relaxed tRNA specificity since it is able to aspartylate not only its cognate tRNA(Asp) but also tRNA(Asn). Reaction proceeds in two steps: L-aspartate is first activated by ATP to form Asp-AMP and then transferred to the acceptor end of tRNA(Asp/Asn). The polypeptide is Aspartate--tRNA(Asp/Asn) ligase (Prochlorococcus marinus (strain MIT 9215)).